The primary structure comprises 293 residues: Protein YIF1A (293 aa).

Positions 1–33 are disordered; the sequence is MAYHSGYGAHGSKHRARAAPDPPPLFDDTSGGY. A2 carries the N-acetylalanine modification. The Cytoplasmic segment spans residues 2 to 138; the sequence is AYHSGYGAHG…PPRQDLNAPD (137 aa). At S12 the chain carries Phosphoserine. Residues 139-159 form a helical membrane-spanning segment; that stretch reads LYIPTMAFITYVLLAGMALGI. At 160-174 the chain is on the lumenal side; that stretch reads QKRFSPEVLGLCAST. A helical transmembrane segment spans residues 175-195; the sequence is ALVWVVMEVLALLLGLYLATV. Residues 196-203 are Cytoplasmic-facing; sequence RSDLSTFH. The chain crosses the membrane as a helical span at residues 204 to 226; the sequence is LLAYSGYKYVGMILSVLTGLLFG. Residues 227 to 229 lie on the Lumenal side of the membrane; that stretch reads SDG. Residues 230-249 form a helical membrane-spanning segment; that stretch reads YYVALAWTSSALMYFIVRSL. Over 250 to 271 the chain is Cytoplasmic; it reads RTAALGPDSMGGPVPRQRLQLY. The helical transmembrane segment at 272–292 threads the bilayer; that stretch reads LTLGAAAFQPLIIYWLTFHLV.

The protein belongs to the YIF1 family. In terms of assembly, interacts with YIPF5.

It localises to the endoplasmic reticulum membrane. The protein localises to the golgi apparatus membrane. The protein resides in the endoplasmic reticulum-Golgi intermediate compartment membrane. Its function is as follows. Possible role in transport between endoplasmic reticulum and Golgi. In Homo sapiens (Human), this protein is Protein YIF1A (YIF1A).